Consider the following 181-residue polypeptide: MIRAVLLGLRAVVFDREAARRLYASGYYGKPLGIPKPRGSNFDAPLELGLLETLHLLERGMLEVYDEEGHRVSVEEVRRRAERFIPKFELLYKVYRDLRDRGYVVRSGLKYGSDFAVYERGPGLEHAPYLVHVMRVDEEIDPLEIVRAGRLSHSVRKAFILALTGPRDTPIRYLLLKWSKP.

Residues Y118, H126, and K157 contribute to the active site.

The protein belongs to the tRNA-intron endonuclease family. Archaeal short subfamily. Homotetramer; although the tetramer contains four active sites, only two participate in the cleavage. Therefore, it should be considered as a dimer of dimers.

The catalysed reaction is pretRNA = a 3'-half-tRNA molecule with a 5'-OH end + a 5'-half-tRNA molecule with a 2',3'-cyclic phosphate end + an intron with a 2',3'-cyclic phosphate and a 5'-hydroxyl terminus.. Its function is as follows. Endonuclease that removes tRNA introns. Cleaves pre-tRNA at the 5'- and 3'-splice sites to release the intron. The products are an intron and two tRNA half-molecules bearing 2',3' cyclic phosphate and 5'-OH termini. Recognizes a pseudosymmetric substrate in which 2 bulged loops of 3 bases are separated by a stem of 4 bp. This is tRNA-splicing endonuclease from Hyperthermus butylicus (strain DSM 5456 / JCM 9403 / PLM1-5).